A 161-amino-acid chain; its full sequence is Troponin C, slow skeletal and cardiac muscles (161 aa).

Met-1 carries the N-acetylmethionine modification. EF-hand domains are found at residues 16-51, 52-87, 92-127, and 128-161; these read QKNEFKAAFDIFVLGAEDGCISTKELGKVMRMLGQN, PTPEELQEMIDEVDEDGSGTVDFDQFLVMMVRCMKD, KTEEELSDLFRMFDKNADGYIDLEELKIMLQATGET, and ITEDDIEELMKDGNKNNDGRIDYDEFLQFMKGVE. Ca(2+) is bound by residues Asp-65, Asp-67, Ser-69, Thr-71, Asp-105, Asn-107, Asp-109, Tyr-111, Glu-116, Asn-143, Asp-145, Arg-147, and Glu-152.

It belongs to the troponin C family.

Its function is as follows. Troponin is the central regulatory protein of striated muscle contraction. Tn consists of three components: Tn-I which is the inhibitor of actomyosin ATPase, Tn-T which contains the binding site for tropomyosin and Tn-C. The binding of calcium to Tn-C abolishes the inhibitory action of Tn on actin filaments. The protein is Troponin C, slow skeletal and cardiac muscles (TNNC1) of Coturnix japonica (Japanese quail).